Here is a 305-residue protein sequence, read N- to C-terminus: Peroxisome biogenesis factor 2 (305 aa).

The Peroxisomal matrix portion of the chain corresponds to 1 to 15; sequence MAAREESTQSANRVL. Residues 16–42 form a helical membrane-spanning segment; it reads RISQLDALELNKALEQLVWSQFTQCFH. At 43–48 the chain is on the cytoplasmic side; the sequence is GFKPGL. Residues 49–74 form a helical membrane-spanning segment; sequence LARFEPEVKAFLWLFLWRFTIYSKNA. At 75–98 the chain is on the peroxisomal matrix side; sequence TVGQSVLNIQHKNDSSPNPVYQPP. The chain crosses the membrane as a helical span at residues 99-125; it reads SKNQKLLYAVCTIGGRWLEERCYDLFR. At 126 to 133 the chain is on the cytoplasmic side; the sequence is NRHLASFG. A helical membrane pass occupies residues 134–160; that stretch reads KAKQCMNFVVGLLKLGELMNFLIFLQK. The Peroxisomal matrix segment spans residues 161 to 187; it reads GKFATLTERLLGIHSVFCKPQNMREVG. A helical membrane pass occupies residues 188–211; it reads FEYMNRELLWHGFAEFLIFLLPLI. The Cytoplasmic portion of the chain corresponds to 212-305; the sequence is NIQKLKAKLS…GIQMSEVNAL (94 aa). Zn(2+) contacts are provided by cysteine 244, cysteine 247, cysteine 259, histidine 261, cysteine 264, cysteine 267, cysteine 280, and cysteine 283. Residues 244 to 284 form an RING-type zinc finger; that stretch reads CALCGEWPTMPHTIGCEHVFCYYCVKSSFLFDIYFTCPKCG.

This sequence belongs to the pex2/pex10/pex12 family. In terms of assembly, component of the PEX2-PEX10-PEX12 retrotranslocation channel, composed of PEX2, PEX10 and PEX12. Post-translationally, forms intramolecular and intermolecular disulfide bonds in response to reactive oxygen species (ROS), promoting higher stability.

The protein resides in the peroxisome membrane. The enzyme catalyses [E2 ubiquitin-conjugating enzyme]-S-ubiquitinyl-L-cysteine + [acceptor protein]-L-cysteine = [E2 ubiquitin-conjugating enzyme]-L-cysteine + [acceptor protein]-S-ubiquitinyl-L-cysteine.. The catalysed reaction is S-ubiquitinyl-[E2 ubiquitin-conjugating enzyme]-L-cysteine + [acceptor protein]-L-lysine = [E2 ubiquitin-conjugating enzyme]-L-cysteine + N(6)-ubiquitinyl-[acceptor protein]-L-lysine.. The protein operates within protein modification; protein ubiquitination. Its function is as follows. E3 ubiquitin-protein ligase component of a retrotranslocation channel required for peroxisome organization by mediating export of the PEX5 receptor from peroxisomes to the cytosol, thereby promoting PEX5 recycling. The retrotranslocation channel is composed of PEX2, PEX10 and PEX12; each subunit contributing transmembrane segments that coassemble into an open channel that specifically allows the passage of PEX5 through the peroxisomal membrane. PEX2 also regulates peroxisome organization by acting as a E3 ubiquitin-protein ligase. PEX2 ubiquitinates PEX5 during its passage through the retrotranslocation channel: catalyzes monoubiquitination of PEX5 at 'Cys-11', a modification that acts as a signal for PEX5 extraction into the cytosol. Required for pexophagy in response to starvation by mediating ubiquitination of peroxisomal proteins, such as PEX5 and ABCD3/PMP70. Also involved in the response to reactive oxygen species (ROS) by mediating 'Lys-48'-linked polyubiquitination and subsequent degradation of PNPLA2/ATGL, thereby regulating lipolysis. In Mus musculus (Mouse), this protein is Peroxisome biogenesis factor 2.